The chain runs to 165 residues: Phosphopantetheine adenylyltransferase (165 aa).

Residue serine 10 coordinates substrate. ATP contacts are provided by residues 10 to 11 (SF) and histidine 18. Substrate-binding residues include lysine 42, threonine 79, and arginine 93. ATP contacts are provided by residues 94 to 96 (GLR), glutamate 104, and 129 to 135 (VRPITAT).

This sequence belongs to the bacterial CoaD family. Homohexamer. Mg(2+) is required as a cofactor.

The protein localises to the cytoplasm. It carries out the reaction (R)-4'-phosphopantetheine + ATP + H(+) = 3'-dephospho-CoA + diphosphate. It functions in the pathway cofactor biosynthesis; coenzyme A biosynthesis; CoA from (R)-pantothenate: step 4/5. Functionally, reversibly transfers an adenylyl group from ATP to 4'-phosphopantetheine, yielding dephospho-CoA (dPCoA) and pyrophosphate. This chain is Phosphopantetheine adenylyltransferase, found in Afipia carboxidovorans (strain ATCC 49405 / DSM 1227 / KCTC 32145 / OM5) (Oligotropha carboxidovorans).